The primary structure comprises 312 residues: Malate dehydrogenase (312 aa).

Residues Gly-7–Gly-13 and Asp-34 each bind NAD(+). Substrate is bound by residues Arg-81 and Arg-87. Residues Asn-94 and Ile-117–Asn-119 contribute to the NAD(+) site. Residues Asn-119 and Arg-153 each coordinate substrate. His-177 serves as the catalytic Proton acceptor. Met-227 contributes to the NAD(+) binding site.

The protein belongs to the LDH/MDH superfamily. MDH type 1 family. Homodimer.

It catalyses the reaction (S)-malate + NAD(+) = oxaloacetate + NADH + H(+). Catalyzes the reversible oxidation of malate to oxaloacetate. The chain is Malate dehydrogenase from Enterobacter sp. (strain 638).